A 158-amino-acid polypeptide reads, in one-letter code: Glycine/sarcosine/betaine reductase complex component A (158 aa).

U44 is a catalytic residue. Position 44 (U44) is a non-standard amino acid, selenocysteine.

The protein belongs to the GrdA family. Monomer. Component of the glycine, sarcosine and betaine reductase complexes, together with components B and C.

It catalyses the reaction acetyl phosphate + [thioredoxin]-disulfide + NH4(+) + H2O = [thioredoxin]-dithiol + glycine + phosphate + H(+). The enzyme catalyses acetyl phosphate + methylamine + [thioredoxin]-disulfide + H2O = sarcosine + [thioredoxin]-dithiol + phosphate + H(+). It carries out the reaction acetyl phosphate + trimethylamine + [thioredoxin]-disulfide + H2O = glycine betaine + [thioredoxin]-dithiol + phosphate + H(+). Functionally, in the first step of glycine, betaine and sarcosine reductases, the substrate is bound to component PB via a Schiff base intermediate. Then the PB-activated substrate is nucleophilically attacked by the selenol anion of component PA to transform it to a carboxymethylated selenoether and the respective amine. By action of component PC, acetyl phosphate is formed, leaving component PA in its oxidized state. Finally component PA becomes reduced by the thioredoxin system to start a new catalytic cycle of reductive deamination. This chain is Glycine/sarcosine/betaine reductase complex component A, found in Alkaliphilus metalliredigens (strain QYMF).